The following is a 428-amino-acid chain: Cysteine synthase 2 (428 aa).

Residues 7–27 traverse the membrane as a helical segment; sequence IYIGSAFVAGVVLTIAFKDLF. N6-(pyridoxal phosphate)lysine is present on Lys106. Pyridoxal 5'-phosphate-binding positions include 260-264 and Ser367; that span reads GTGGT.

It belongs to the cysteine synthase/cystathionine beta-synthase family. Requires pyridoxal 5'-phosphate as cofactor.

Its subcellular location is the mitochondrion outer membrane. It carries out the reaction O-acetyl-L-serine + hydrogen sulfide = L-cysteine + acetate. Functionally, putative cysteine synthase that catalyzes the conversion of O-acetyl-L-serine (OAS) into cysteine, the last step in the cysteine biosynthesis pathway. However, in contrast to cysteine synthase cysB, this CS-like protein seems not to function in cysteine biosynthesis. This chain is Cysteine synthase 2, found in Emericella nidulans (strain FGSC A4 / ATCC 38163 / CBS 112.46 / NRRL 194 / M139) (Aspergillus nidulans).